The sequence spans 159 residues: Ribosomal RNA large subunit methyltransferase H (159 aa).

Residues leucine 76, glycine 108, and 127–132 (FGLLTL) each bind S-adenosyl-L-methionine.

This sequence belongs to the RNA methyltransferase RlmH family. As to quaternary structure, homodimer.

It is found in the cytoplasm. The enzyme catalyses pseudouridine(1915) in 23S rRNA + S-adenosyl-L-methionine = N(3)-methylpseudouridine(1915) in 23S rRNA + S-adenosyl-L-homocysteine + H(+). Specifically methylates the pseudouridine at position 1915 (m3Psi1915) in 23S rRNA. This chain is Ribosomal RNA large subunit methyltransferase H, found in Streptococcus pyogenes serotype M3 (strain SSI-1).